We begin with the raw amino-acid sequence, 724 residues long: Catalase-peroxidase (724 aa).

A disordered region spans residues 1–20 (MDENKTKPAGKCPVMHGGNT). Positions 98-225 (WHSAGTYRTA…LAAVQMGLIY (128 aa)) form a cross-link, tryptophyl-tyrosyl-methioninium (Trp-Tyr) (with M-251). Residue H99 is the Proton acceptor of the active site. Residues 225–251 (YVNPEGVDGNPDPLRTAQDMRVTFSRM) constitute a cross-link (tryptophyl-tyrosyl-methioninium (Tyr-Met) (with W-98)). H266 is a binding site for heme b.

It belongs to the peroxidase family. Peroxidase/catalase subfamily. In terms of assembly, homodimer or homotetramer. It depends on heme b as a cofactor. Post-translationally, formation of the three residue Trp-Tyr-Met cross-link is important for the catalase, but not the peroxidase activity of the enzyme.

It catalyses the reaction H2O2 + AH2 = A + 2 H2O. The enzyme catalyses 2 H2O2 = O2 + 2 H2O. Bifunctional enzyme with both catalase and broad-spectrum peroxidase activity. This is Catalase-peroxidase from Pectobacterium carotovorum subsp. carotovorum (strain PC1).